Here is a 128-residue protein sequence, read N- to C-terminus: Ribosome-binding factor A (128 aa).

Belongs to the RbfA family. Monomer. Binds 30S ribosomal subunits, but not 50S ribosomal subunits or 70S ribosomes.

The protein resides in the cytoplasm. One of several proteins that assist in the late maturation steps of the functional core of the 30S ribosomal subunit. Associates with free 30S ribosomal subunits (but not with 30S subunits that are part of 70S ribosomes or polysomes). Required for efficient processing of 16S rRNA. May interact with the 5'-terminal helix region of 16S rRNA. The protein is Ribosome-binding factor A of Herminiimonas arsenicoxydans.